A 471-amino-acid polypeptide reads, in one-letter code: 5-hydroxytryptamine receptor 2A (471 aa).

Topologically, residues 1-80 (MEILCEDNIS…LQEKNWSALL (80 aa)) are extracellular. Residues Asn-8, Asn-38, Asn-44, Asn-51, and Asn-54 are each glycosylated (N-linked (GlcNAc...) asparagine). A helical membrane pass occupies residues 81–97 (TTVVIILTIAGNILVIM). The Cytoplasmic portion of the chain corresponds to 98–111 (AVSLEKKLQNATNY). Residues 112-137 (FLMSLAIADMLLGFLVMPVSMLTILY) traverse the membrane as a helical segment. Residues 138 to 146 (GYRWPLPSK) lie on the Extracellular side of the membrane. A helical membrane pass occupies residues 147–171 (LCAVWIYLDVLFSTASIMHLCAISL). A disulfide bridge connects residues Cys-148 and Cys-227. Asp-155 serves as a coordination point for serotonin. The DRY motif; important for ligand-induced conformation changes motif lies at 172–174 (DRY). The Cytoplasmic portion of the chain corresponds to 172-191 (DRYVAIQNPIHHSRFNSRTK). A helical membrane pass occupies residues 192 to 215 (AFLKIIAVWTISVGISMPIPVFGL). Over 216–232 (QDDSKVFKEGSCLLADD) the chain is Extracellular. The helical transmembrane segment at 233 to 258 (NFVLIGSFVAFFIPLTIMVITYFLTI) threads the bilayer. At 259–322 (KSLQKEATLC…QSISNEQKAC (64 aa)) the chain is on the cytoplasmic side. Ser-280 carries the post-translational modification Phosphoserine. The chain crosses the membrane as a helical span at residues 323-348 (KVLGIVFFLFVVMWCPFFITNIMAVI). A serotonin-binding site is contributed by Asn-343. Cys-349 and Cys-353 are oxidised to a cystine. Residues 349–356 (CKESCNEN) are Extracellular-facing. The helical transmembrane segment at 357–382 (VIGALLNVFVWIGYLSSAVNPLVYTL) threads the bilayer. Residues 376 to 380 (NPLVY) carry the NPxxY motif; important for ligand-induced conformation changes and signaling motif. Over 383–471 (FNKTYRSAFS…ETVNEKVSCV (89 aa)) the chain is Cytoplasmic. The PDZ-binding motif lies at 469–471 (SCV).

The protein belongs to the G-protein coupled receptor 1 family. As to quaternary structure, interacts (via C-terminus) with MPDZ and PATJ. May interact (via C-terminus) with MPP3, PRDX6, DLG4, DLG1, CASK, APBA1 and MAGI2. Interacts with GRM2 and DRD2; this may affect signaling. As to expression, detected in neurons in brain cortex. Detected in adult intestine, especially in mucosal epithelium, longitudinal and circular layers of muscularis externa and myenteric plexuses. Highly expressed in Paneth cells, and detected at lower levels in enterocytes (at protein level). Detected in neurons in the brain cortex.

The protein localises to the cell membrane. The protein resides in the cell projection. It is found in the dendrite. Its subcellular location is the axon. It localises to the cytoplasmic vesicle. The protein localises to the membrane. The protein resides in the caveola. It is found in the presynapse. With respect to regulation, G-protein coupled receptor activity is regulated by lipids: oleamide increases HTR2A-mediated activity. In terms of biological role, G-protein coupled receptor for 5-hydroxytryptamine (serotonin). Also functions as a receptor for various drugs and psychoactive substances, including mescaline, psilocybin, 1-(2,5-dimethoxy-4-iodophenyl)-2-aminopropane (DOI) and lysergic acid diethylamide (LSD). Ligand binding causes a conformation change that triggers signaling via guanine nucleotide-binding proteins (G proteins) and modulates the activity of downstream effectors. HTR2A is coupled to G(q)/G(11) G alpha proteins and activates phospholipase C-beta, releasing diacylglycerol (DAG) and inositol 1,4,5-trisphosphate (IP3) second messengers that modulate the activity of phosphatidylinositol 3-kinase and promote the release of Ca(2+) ions from intracellular stores, respectively. Beta-arrestin family members inhibit signaling via G proteins and mediate activation of alternative signaling pathways. Affects neural activity, perception, cognition and mood. Plays a role in the regulation of behavior, including responses to anxiogenic situations and psychoactive substances. Plays a role in intestinal smooth muscle contraction, and may play a role in arterial vasoconstriction. This is 5-hydroxytryptamine receptor 2A (Htr2a) from Mus musculus (Mouse).